A 1498-amino-acid chain; its full sequence is Rap guanine nucleotide exchange factor 2 (1498 aa).

2 disordered regions span residues 40-59 (HVSS…SSSL) and 68-101 (SEAG…SDPL). The span at 83-94 (VDSEDDDDEEDI) shows a compositional bias: acidic residues. A nucleoside 3',5'-cyclic phosphate is bound at residue 135 to 252 (AFANMTMSVR…QKVEEEGEIV (118 aa)). The N-terminal Ras-GEF domain maps to 267 to 380 (KGHIVIKGTS…RLLNIACAAK (114 aa)). Positions 385–468 (LMTLTKPSRE…LSITVKTNLF (84 aa)) constitute a PDZ domain. Ser-501 is modified (phosphoserine). Positions 606–692 (PDQVLRVFKA…GRYYLKNNME (87 aa)) constitute a Ras-associating domain. Thr-644 carries the post-translational modification Phosphothreonine. Positions 717–944 (STVEVATQLS…SQGSTNATVL (228 aa)) constitute a Ras-GEF domain. Phosphoserine is present on residues Ser-806, Ser-930, Ser-933, Ser-1022, Ser-1079, Ser-1088, Ser-1094, Ser-1115, Ser-1119, Ser-1158, and Ser-1175. The tract at residues 1002-1048 (PATNTLPKNPGDKKPVKSETSPVAPRAGSQQKAQAQPPPPQPQPQHK) is disordered. Positions 1094-1159 (SLERHKKQAE…RSSIVSNSSF (66 aa)) are disordered. Low complexity-rich tracts occupy residues 1110 to 1124 (SSQL…QSSP) and 1140 to 1159 (SDSG…NSSF). Disordered stretches follow at residues 1224–1257 (STEE…GSHD), 1304–1371 (TKYN…TKPV), and 1392–1498 (EGRY…VSAV). 2 stretches are compositionally biased toward polar residues: residues 1246–1257 (GSWTSCSSGSHD) and 1306–1330 (YNRQ…SSTG). Over residues 1354 to 1365 (EAESSSVTSVTT) the composition is skewed to low complexity. Positions 1487 to 1498 (TEEDEDEQVSAV) are enriched in acidic residues.

Belongs to the RAPGEF2 family. In terms of assembly, found in a complex, at least composed of KIDINS220, MAGI2, NTRK1 and RAPGEF2; the complex is mainly formed at late endosomes in a neuronal growth factor (NGF)-dependent manner. Interacts (via C-terminal domain) with NEDD4 (via WW domains); this interaction leads to ubiquitination and degradation via the proteasome pathway in a cAMP-independent manner. Interacts with MAGI1 (via PDZ domain). Interacts with ADRB1 (via C-terminal PDZ motif); the interaction is direct. Interacts (via Ras-associating domain) with RAP1A (via GTP-bound active form). Interacts weakly with HRAS (via GDP- and GTP-bound forms). Interacts (via C-terminal domain) with MAGI2 (via PDZ and WW domains). Interacts with CDH1, CTNNB1 and TJP1. Ubiquitinated by NEDD4, leading to proteasomal degradation. Post-translationally, phosphorylation by PLK2 promotes its activity.

It localises to the cell junction. The protein localises to the cytoplasm. The protein resides in the perinuclear region. It is found in the cell membrane. Its subcellular location is the late endosome. Its function is as follows. Functions as a guanine nucleotide exchange factor (GEF), which activates Rap and Ras family of small GTPases by exchanging bound GDP for free GTP in a cAMP-dependent manner. Serves as a link between cell surface receptors and Rap/Ras GTPases in intracellular signaling cascades. Also acts as an effector for Rap1 by direct association with Rap1-GTP thereby leading to the amplification of Rap1-mediated signaling. Shows weak activity on HRAS. It is controversial whether RAPGEF2 binds cAMP and cGMP or not. Its binding to ligand-activated beta-1 adrenergic receptor ADRB1 leads to the Ras activation through the G(s)-alpha signaling pathway. Involved in the cAMP-induced Ras and Erk1/2 signaling pathway that leads to sustained inhibition of long term melanogenesis by reducing dendrite extension and melanin synthesis. Also provides inhibitory signals for cell proliferation of melanoma cells and promotes their apoptosis in a cAMP-independent nanner. Regulates cAMP-induced neuritogenesis by mediating the Rap1/B-Raf/ERK signaling through a pathway that is independent on both PKA and RAPGEF3/RAPGEF4. Involved in neuron migration and in the formation of the major forebrain fiber connections forming the corpus callosum, the anterior commissure and the hippocampal commissure during brain development. Involved in neuronal growth factor (NGF)-induced sustained activation of Rap1 at late endosomes and in brain-derived neurotrophic factor (BDNF)-induced axon outgrowth of hippocampal neurons. Plays a role in the regulation of embryonic blood vessel formation and in the establishment of basal junction integrity and endothelial barrier function. May be involved in the regulation of the vascular endothelial growth factor receptor KDR and cadherin CDH5 expression at allantois endothelial cell-cell junctions. The polypeptide is Rap guanine nucleotide exchange factor 2 (RAPGEF2) (Canis lupus familiaris (Dog)).